The following is a 445-amino-acid chain: Potassium/proton antiporter CemA (445 aa).

4 helical membrane passes run 44 to 64 (MQVS…VNIC), 330 to 350 (ALTC…ILIL), 368 to 388 (LIII…GWKL), and 405 to 425 (FILC…KYWI).

The protein belongs to the CemA family.

The protein localises to the plastid. Its subcellular location is the chloroplast inner membrane. The catalysed reaction is K(+)(in) + H(+)(out) = K(+)(out) + H(+)(in). Functionally, contributes to K(+)/H(+) antiport activity by supporting proton efflux to control proton extrusion and homeostasis in chloroplasts in a light-dependent manner to modulate photosynthesis. Prevents excessive induction of non-photochemical quenching (NPQ) under continuous-light conditions. Indirectly promotes efficient inorganic carbon uptake into chloroplasts. The sequence is that of Potassium/proton antiporter CemA from Pleurastrum terricola (Filamentous green alga).